Reading from the N-terminus, the 81-residue chain is Polcalcin Syr v 3 (81 aa).

EF-hand domains lie at 3–38 (EEVA…LGSV) and 41–73 (EEIQ…NSGL). Positions 16, 18, 20, 22, 27, 51, 53, 55, and 62 each coordinate Ca(2+).

This is Polcalcin Syr v 3 (SYRV3) from Syringa vulgaris (Common lilac).